A 420-amino-acid chain; its full sequence is Fasciclin-like arabinogalactan protein 4 (420 aa).

The signal sequence occupies residues 1–28; that stretch reads MANVISISHFTLLALPYLLLLLSSTAAA. FAS1 domains follow at residues 29–177 and 205–351; these read INVT…DSLI and GINL…SKVL. N-linked (GlcNAc...) asparagine glycans are attached at residues asparagine 30, asparagine 40, asparagine 135, asparagine 154, asparagine 167, asparagine 207, asparagine 312, and asparagine 317. The tract at residues 360 to 388 is disordered; that stretch reads SGQPVATAPPQEISLSPESSSEQPSRLVS. Residues 368–384 show a composition bias toward low complexity; sequence PPQEISLSPESSSEQPS. A lipid anchor (GPI-anchor amidated serine) is attached at serine 396. Residues 397–420 constitute a propeptide, removed in mature form; the sequence is GAVKRPLGFLVLWCWCIAFCYVLV.

The protein belongs to the fasciclin-like AGP family. Expressed in all plant organs and tissues, including guard cells in the leaf.

It is found in the cell membrane. In terms of biological role, may be a cell surface adhesion protein that is required for normal cell expansion. The chain is Fasciclin-like arabinogalactan protein 4 (FLA4) from Arabidopsis thaliana (Mouse-ear cress).